A 312-amino-acid chain; its full sequence is Nicotinamide adenine dinucleotide transporter 1, chloroplastic (312 aa).

3 Solcar repeats span residues 11–103, 111–199, and 211–299; these read KNVL…LKSF, LSVG…IKVY, and LNAR…VHRF. 6 helical membrane passes run 17 to 37, 78 to 98, 117 to 137, 171 to 191, 216 to 232, and 271 to 293; these read AAAG…LDVI, GLSP…TMYD, VLAA…LWVV, GLYS…IQFP, VAVA…TLTY, and FYRG…FTSF.

It belongs to the mitochondrial carrier (TC 2.A.29) family. In terms of tissue distribution, highly expressed in young leaf mesophyll cells, root tips and at the branches of adventitious roots. Low expression in all flower tissues and not detected in siliques and seeds.

The protein localises to the plastid. Its subcellular location is the chloroplast membrane. With respect to regulation, inhibited by pyridoxal 5'-phosphate, bathophenanthroline, tannic acid, mersalyl, mercuric chloride, p-hydroxymercuribenzoate, p-hydroxymercuribenzoate sulfonate, bromocresol purple and N-ethylmaleimide. Functionally, mediates the NAD(+) import into chloroplast. Favors the NAD(+)(in)/ADP or AMP(out) antiport exchange, but is also able to catalyze a low unidirectional transport (uniport) of NAD(+). Transports NAD(+), nicotinic acid adenine dinucleotide, nicotinamide mononucleotide, nicotinic acid mononucleotide, FAD, FMN, TTP, TDP, TMP, UTP, UDP, UMP, CTP, CDP, CMP, GTP, GDP, GMP, 3'-AMP, ATP, ADP, and AMP, has low transport activity with cAMP, pyrophosphate, NADH and alpha-NAD(+), and has no activity with NADP(+), NADPH, nicotinamide, nicotinic acid, adenosine, thiamine mono- or diphosphate, inorganic phosphate, CoA, folate, NaCl, malate, malonate, citrate, fumarate, aspartate, glutamate, S-adenosylmethionine, lysine, arginine, and ornithine. This is Nicotinamide adenine dinucleotide transporter 1, chloroplastic (NDT1) from Arabidopsis thaliana (Mouse-ear cress).